The primary structure comprises 371 residues: Peptide chain release factor 2 (371 aa).

Gln253 bears the N5-methylglutamine mark.

It belongs to the prokaryotic/mitochondrial release factor family. In terms of processing, methylated by PrmC. Methylation increases the termination efficiency of RF2.

The protein localises to the cytoplasm. Its function is as follows. Peptide chain release factor 2 directs the termination of translation in response to the peptide chain termination codons UGA and UAA. The polypeptide is Peptide chain release factor 2 (Mycobacterium ulcerans (strain Agy99)).